The chain runs to 915 residues: MERPRAPPSPLNDAESLSERRSLEIFNPSSGKETHGSTSSSSKPPLDGNNKGSSSKWMEFQDSAKITERTAEWGLSAVKPDSGDDGISFKLSSEVERSKNMSRRSSEESTSSESGAFPRVSQELKTALSTLQQTFVVSDATQPHCPIVYASSGFFTMTGYSSKEIVGRNCRFLQGPDTDKNEVAKIRDCVKNGKSYCGRLLNYKKDGTPFWNLLTVTPIKDDQGNTIKFIGMQVEVSKYTEGVNDKALRPNGLSKSLIRYDARQKEKALDSITEVVQTIRHRKSQVQESVSNDTMVKPDSSTTPTPGRQTRQSDEASKSFRTPGRVSTPTGSKLKSSNNRHEDLLRMEPEELMLSTEVIGQRDSWDLSDRERDIRQGIDLATTLERIEKNFVISDPRLPDNPIIFASDSFLELTEYSREEILGRNCRFLQGPETDQATVQKIRDAIRDQREITVQLINYTKSGKKFWNLFHLQPMRDQKGELQYFIGVQLDGSDHVEPLQNRLSERTEMQSSKLVKATATNVDEAVRELPDANTRPEDLWAAHSKPVYPLPHNKESTSWKAIKKIQASGETVGLHHFKPIKPLGSGDTGSVHLVELKGTGELYAMKAMEKTMMLNRNKAHRACIEREIISLLDHPFLPTLYASFQTSTHVCLITDFCPGGELFALLDRQPMKILTEDSARFYAAEVVIGLEYLHCLGIVYRDLKPENILLKKDGHIVLADFDLSFMTTCTPQLIIPAAPSKRRRSKSQPLPTFVAEPSTQSNSFVGTEEYIAPEIITGAGHTSAIDWWALGILLYEMLYGRTPFRGKNRQKTFANILHKDLTFPSSIPVSLVGRQLINTLLNRDPSSRLGSKGGANEIKQHAFFRGINWPLIRGMSPPPLDAPLSIIEKDPNAKDIKWEDDGVLVNSTDLDIDLF.

Over residues 1–10 the composition is skewed to pro residues; that stretch reads MERPRAPPSP. Disordered regions lie at residues 1–62 and 84–118; these read MERP…EFQD and DDGI…GAFP. Phosphoserine is present on residues Ser9 and Ser22. The segment covering 27–43 has biased composition (polar residues); that stretch reads NPSSGKETHGSTSSSSK. Residues 93–107 are compositionally biased toward basic and acidic residues; the sequence is SEVERSKNMSRRSSE. The region spanning 120–193 is the PAS 1 domain; the sequence is VSQELKTALS…AKIRDCVKNG (74 aa). Ser121 carries the phosphoserine modification. An FMN-binding site is contributed by Asn169. Cys170 is subject to S-4a-FMN cysteine. Positions 171, 174, 187, 202, 212, 233, and 238 each coordinate FMN. The region spanning 194 to 248 is the PAC 1 domain; it reads KSYCGRLLNYKKDGTPFWNLLTVTPIKDDQGNTIKFIGMQVEVSKYTEGVNDKAL. The interval 281–344 is disordered; that stretch reads HRKSQVQESV…KSSNNRHEDL (64 aa). Polar residues-rich tracts occupy residues 286 to 310 and 325 to 337; these read VQES…GRQT and RVST…LKSS. Ser364 is subject to Phosphoserine. In terms of domain architecture, PAS 2 spans 376–449; it reads QGIDLATTLE…QKIRDAIRDQ (74 aa). Position 425 (Asn425) interacts with FMN. At Cys426 the chain carries S-4a-FMN cysteine. FMN is bound by residues Arg427, Gln430, Arg443, Asn458, Asn468, Phe470, and Gln489. Positions 450–504 constitute a PAC 2 domain; the sequence is REITVQLINYTKSGKKFWNLFHLQPMRDQKGELQYFIGVQLDGSDHVEPLQNRLS. Residues 577 to 864 form the Protein kinase domain; that stretch reads FKPIKPLGSG…ANEIKQHAFF (288 aa). Residues 583-591 and Lys606 contribute to the ATP site; that span reads LGSGDTGSV. The active-site Proton acceptor is Asp702. Residues 720–774 are activation loop; that stretch reads DFDLSFMTTCTPQLIIPAAPSKRRRSKSQPLPTFVAEPSTQSNSFVGTEEYIAPE.

The protein belongs to the protein kinase superfamily. AGC Ser/Thr protein kinase family. In terms of assembly, homodimer. Interacts with PKS1, PKS2, RPT3 and PHOT1. Associates with CBC1 and CBC2. Binds to BHP. Requires FMN as cofactor. In terms of processing, autophosphorylated in response to blue light irradiation. 2 molecules of FMN bind covalently to cysteines after exposure to blue light and are reversed in the dark. In terms of tissue distribution, expressed in leaves, stems and flowers, and to a lower extent in roots. Present in guard cells (at protein level).

It is found in the cell membrane. It carries out the reaction L-seryl-[protein] + ATP = O-phospho-L-seryl-[protein] + ADP + H(+). The enzyme catalyses L-threonyl-[protein] + ATP = O-phospho-L-threonyl-[protein] + ADP + H(+). With respect to regulation, autophosphorylation is inhibited by staurosporine, but not by tyrphostin 9, sphingosine, GW5074 and BML-265. Protein kinase that acts as a blue light photoreceptor in a signal-transduction pathway for photo-induced movements. Triggers the phosphorylation of AHA1 and AHA2 C-terminal penultimate Thr in guard cells to activate them and induce stomatal opening in response to blue light (BL). Also phosphorylates BLUS1, a kinase involved in stomatal opening. Mediates calcium spiking of extra- and intracellular origins in response to blue light. Involved in hypocotyl phototropism. Contributes to the chloroplast accumulation in low blue light and mediates their translocation (avoidance response) at high fluence. Regulates stomata opening and photomorphogenesis response of leaf tissue. Not involved in hypocotyl elongation inhibition, anthocyanin accumulation or cotyledon opening. The protein is Phototropin-2 of Arabidopsis thaliana (Mouse-ear cress).